The chain runs to 143 residues: Ribosome-binding factor A (143 aa).

Residues 123–143 (VRAQAAQAKPAGEANPYKERN) are disordered. Residues 124-136 (RAQAAQAKPAGEA) show a composition bias toward low complexity.

It belongs to the RbfA family. Monomer. Binds 30S ribosomal subunits, but not 50S ribosomal subunits or 70S ribosomes.

It is found in the cytoplasm. Functionally, one of several proteins that assist in the late maturation steps of the functional core of the 30S ribosomal subunit. Associates with free 30S ribosomal subunits (but not with 30S subunits that are part of 70S ribosomes or polysomes). Required for efficient processing of 16S rRNA. May interact with the 5'-terminal helix region of 16S rRNA. The sequence is that of Ribosome-binding factor A from Corynebacterium urealyticum (strain ATCC 43042 / DSM 7109).